The following is a 211-amino-acid chain: Probable nicotinate-nucleotide adenylyltransferase (211 aa).

This sequence belongs to the NadD family.

It carries out the reaction nicotinate beta-D-ribonucleotide + ATP + H(+) = deamido-NAD(+) + diphosphate. Its pathway is cofactor biosynthesis; NAD(+) biosynthesis; deamido-NAD(+) from nicotinate D-ribonucleotide: step 1/1. In terms of biological role, catalyzes the reversible adenylation of nicotinate mononucleotide (NaMN) to nicotinic acid adenine dinucleotide (NaAD). The chain is Probable nicotinate-nucleotide adenylyltransferase from Shewanella sediminis (strain HAW-EB3).